A 314-amino-acid chain; its full sequence is Mitochondrial MRF1 N(5)-glutamine methyltransferase MTQ1 (314 aa).

S-adenosyl-L-methionine contacts are provided by residues 118–122 (FTGTG), aspartate 141, and asparagine 188. A substrate-binding site is contributed by 188–191 (NPPY).

The protein belongs to the protein N5-glutamine methyltransferase family.

The protein resides in the mitochondrion. The catalysed reaction is L-glutaminyl-[peptide chain release factor] + S-adenosyl-L-methionine = N(5)-methyl-L-glutaminyl-[peptide chain release factor] + S-adenosyl-L-homocysteine + H(+). Its function is as follows. Methylates MRF1 on 'Gln-287' using S-adenosyl L-methionine as methyl donor. The sequence is that of Mitochondrial MRF1 N(5)-glutamine methyltransferase MTQ1 (MTQ1) from Saccharomyces cerevisiae (strain ATCC 204508 / S288c) (Baker's yeast).